The following is a 189-amino-acid chain: Inner membrane-spanning protein YciB (189 aa).

The next 5 membrane-spanning stretches (helical) occupy residues 4 to 24 (FFEF…DIYI), 53 to 73 (ITFG…DDVF), 76 to 96 (WKVT…QFFY), 121 to 141 (MAWA…AFSL), and 149 to 169 (FKVF…GLYI).

The protein belongs to the YciB family.

It localises to the cell inner membrane. Functionally, plays a role in cell envelope biogenesis, maintenance of cell envelope integrity and membrane homeostasis. The sequence is that of Inner membrane-spanning protein YciB from Psychromonas ingrahamii (strain DSM 17664 / CCUG 51855 / 37).